An 88-amino-acid polypeptide reads, in one-letter code: Small ribosomal subunit protein bS20 (88 aa).

It belongs to the bacterial ribosomal protein bS20 family.

Functionally, binds directly to 16S ribosomal RNA. The protein is Small ribosomal subunit protein bS20 of Clostridium acetobutylicum (strain ATCC 824 / DSM 792 / JCM 1419 / IAM 19013 / LMG 5710 / NBRC 13948 / NRRL B-527 / VKM B-1787 / 2291 / W).